The sequence spans 283 residues: ATP synthase gamma chain (283 aa).

Belongs to the ATPase gamma chain family. In terms of assembly, F-type ATPases have 2 components, CF(1) - the catalytic core - and CF(0) - the membrane proton channel. CF(1) has five subunits: alpha(3), beta(3), gamma(1), delta(1), epsilon(1). CF(0) has three main subunits: a, b and c.

It localises to the cell membrane. In terms of biological role, produces ATP from ADP in the presence of a proton gradient across the membrane. The gamma chain is believed to be important in regulating ATPase activity and the flow of protons through the CF(0) complex. This chain is ATP synthase gamma chain, found in Clostridium kluyveri (strain NBRC 12016).